A 223-amino-acid chain; its full sequence is MCHGGTWAGDYVLNVIATGLSLKARGKRRRQRWVDDGRVLALGESRRSSAISVADVVASLTRDVADFPVPGVEFKDLTPLFADRRGLAAVTEALADRASGADLVAGVDARGFLVAAAVATRLEVGVLAVRKGGKLPRPVLSEEYYREYGAATLEILAEGIEVAGRRVVIIDDVLATGGTIGATRRLLERGGANVAGAAVVVELAGLSGRAALAPLPVHSLSRL.

The protein belongs to the purine/pyrimidine phosphoribosyltransferase family. As to quaternary structure, homodimer.

The protein localises to the cytoplasm. The catalysed reaction is AMP + diphosphate = 5-phospho-alpha-D-ribose 1-diphosphate + adenine. It functions in the pathway purine metabolism; AMP biosynthesis via salvage pathway; AMP from adenine: step 1/1. Functionally, catalyzes a salvage reaction resulting in the formation of AMP, that is energically less costly than de novo synthesis. The polypeptide is Adenine phosphoribosyltransferase (Mycobacterium bovis (strain ATCC BAA-935 / AF2122/97)).